A 352-amino-acid chain; its full sequence is Protein RecA (352 aa).

67–74 contributes to the ATP binding site; the sequence is GPESSGKT. A disordered region spans residues 333–352; sequence DSTPDFAVDGNDAEETEQDF. The segment covering 343-352 has biased composition (acidic residues); that stretch reads NDAEETEQDF.

Belongs to the RecA family.

The protein resides in the cytoplasm. In terms of biological role, can catalyze the hydrolysis of ATP in the presence of single-stranded DNA, the ATP-dependent uptake of single-stranded DNA by duplex DNA, and the ATP-dependent hybridization of homologous single-stranded DNAs. It interacts with LexA causing its activation and leading to its autocatalytic cleavage. The sequence is that of Protein RecA from Klebsiella pneumoniae (strain 342).